The following is a 177-amino-acid chain: Translation initiation factor IF-3 (177 aa).

This sequence belongs to the IF-3 family. In terms of assembly, monomer.

It is found in the cytoplasm. Functionally, IF-3 binds to the 30S ribosomal subunit and shifts the equilibrium between 70S ribosomes and their 50S and 30S subunits in favor of the free subunits, thus enhancing the availability of 30S subunits on which protein synthesis initiation begins. In Synechocystis sp. (strain ATCC 27184 / PCC 6803 / Kazusa), this protein is Translation initiation factor IF-3.